The following is a 256-amino-acid chain: 5-keto-4-deoxy-D-glucarate aldolase (256 aa).

His-50 acts as the Proton acceptor in catalysis. Position 151 (Gln-151) interacts with substrate. A Mg(2+)-binding site is contributed by Glu-153. 2 residues coordinate substrate: Ser-178 and Asp-179. Asp-179 is a binding site for Mg(2+).

It belongs to the HpcH/HpaI aldolase family. KDGluc aldolase subfamily. In terms of assembly, homohexamer; trimer of dimers. Mg(2+) is required as a cofactor.

The catalysed reaction is 5-dehydro-4-deoxy-D-glucarate = 2-hydroxy-3-oxopropanoate + pyruvate. It catalyses the reaction 2-dehydro-3-deoxy-D-glucarate = 2-hydroxy-3-oxopropanoate + pyruvate. It participates in carbohydrate acid metabolism; galactarate degradation; D-glycerate from galactarate: step 2/3. Catalyzes the reversible retro-aldol cleavage of both 5-keto-4-deoxy-D-glucarate and 2-keto-3-deoxy-D-glucarate to pyruvate and tartronic semialdehyde. The chain is 5-keto-4-deoxy-D-glucarate aldolase from Shigella boydii serotype 4 (strain Sb227).